Consider the following 133-residue polypeptide: Protein NrdI (133 aa).

It belongs to the NrdI family.

Probably involved in ribonucleotide reductase function. The protein is Protein NrdI of Escherichia coli O17:K52:H18 (strain UMN026 / ExPEC).